The sequence spans 128 residues: LIM domain-containing protein 2 (128 aa).

An N-acetylmethionine modification is found at M1. Positions 1–25 are disordered; it reads MFQAAGAAQATPSHEAKGSSGNSTV. An LIM zinc-binding domain is found at 39-99; the sequence is ETCAACQKTV…KPHFQQLFKS (61 aa). Positions 41, 44, 62, 65, 68, 71, 89, and 92 each coordinate Zn(2+).

In terms of assembly, interacts with ILK.

It is found in the cytoplasm. It localises to the nucleus. Its function is as follows. Acts as an activator of the protein-kinase ILK, thereby regulating cell motility. In Rattus norvegicus (Rat), this protein is LIM domain-containing protein 2 (Limd2).